The primary structure comprises 314 residues: Coiled-coil domain-containing protein 42 like-2 (314 aa).

Coiled-coil stretches lie at residues Arg34–Leu133 and Asn175–Glu231.

Belongs to the CFAP73 family.

This chain is Coiled-coil domain-containing protein 42 like-2, found in Xenopus tropicalis (Western clawed frog).